A 151-amino-acid polypeptide reads, in one-letter code: D-aminoacyl-tRNA deacylase (151 aa).

The short motif at 137–138 is the Gly-cisPro motif, important for rejection of L-amino acids element; it reads GP.

It belongs to the DTD family. As to quaternary structure, homodimer.

Its subcellular location is the cytoplasm. It catalyses the reaction glycyl-tRNA(Ala) + H2O = tRNA(Ala) + glycine + H(+). The catalysed reaction is a D-aminoacyl-tRNA + H2O = a tRNA + a D-alpha-amino acid + H(+). Functionally, an aminoacyl-tRNA editing enzyme that deacylates mischarged D-aminoacyl-tRNAs. Also deacylates mischarged glycyl-tRNA(Ala), protecting cells against glycine mischarging by AlaRS. Acts via tRNA-based rather than protein-based catalysis; rejects L-amino acids rather than detecting D-amino acids in the active site. By recycling D-aminoacyl-tRNA to D-amino acids and free tRNA molecules, this enzyme counteracts the toxicity associated with the formation of D-aminoacyl-tRNA entities in vivo and helps enforce protein L-homochirality. The sequence is that of D-aminoacyl-tRNA deacylase from Azoarcus sp. (strain BH72).